Here is a 156-residue protein sequence, read N- to C-terminus: uncharacterized protein (156 aa).

This is an uncharacterized protein from Aedes vexans (Inland floodwater mosquito).